The following is a 147-amino-acid chain: Hemoglobin subunit epsilon (147 aa).

In terms of domain architecture, Globin spans 3-147 (HFTAEEKAAI…VAIALGHKYH (145 aa)). A phosphoserine mark is found at Ser-14 and Ser-51. Residues His-64 and His-93 each coordinate heme b.

Belongs to the globin family. As to quaternary structure, heterotetramer of two alpha chains and two epsilon chains in early embryonic hemoglobin Gower-2; two zeta chains and two epsilon chains in early embryonic hemoglobin Gower-1. In terms of tissue distribution, red blood cells.

Its function is as follows. The epsilon chain is a beta-type chain of early mammalian embryonic hemoglobin. The protein is Hemoglobin subunit epsilon (HBE1) of Leontopithecus rosalia (Golden lion tamarin).